The chain runs to 629 residues: tRNA uridine 5-carboxymethylaminomethyl modification enzyme MnmG (629 aa).

FAD-binding positions include 13–18 (GGGHAG), Val-125, and Ser-180. An NAD(+)-binding site is contributed by 273 to 287 (GPRYCPSIEDKVMRF). Gln-370 serves as a coordination point for FAD.

It belongs to the MnmG family. In terms of assembly, homodimer. Heterotetramer of two MnmE and two MnmG subunits. FAD serves as cofactor.

Its subcellular location is the cytoplasm. Its function is as follows. NAD-binding protein involved in the addition of a carboxymethylaminomethyl (cmnm) group at the wobble position (U34) of certain tRNAs, forming tRNA-cmnm(5)s(2)U34. The sequence is that of tRNA uridine 5-carboxymethylaminomethyl modification enzyme MnmG from Salmonella paratyphi C (strain RKS4594).